The primary structure comprises 606 residues: Aspartate--tRNA(Asp/Asn) ligase (606 aa).

Glu196 contacts L-aspartate. An aspartate region spans residues 220–223 (QIFK). Arg242 contributes to the L-aspartate binding site. Residues 242–244 (RDE) and Gln251 each bind ATP. His465 contributes to the L-aspartate binding site. Glu499 is a binding site for ATP. An L-aspartate-binding site is contributed by Arg506. Residue 551-554 (GMDR) participates in ATP binding.

This sequence belongs to the class-II aminoacyl-tRNA synthetase family. Type 1 subfamily. Homodimer.

It localises to the cytoplasm. The enzyme catalyses tRNA(Asx) + L-aspartate + ATP = L-aspartyl-tRNA(Asx) + AMP + diphosphate. Aspartyl-tRNA synthetase with relaxed tRNA specificity since it is able to aspartylate not only its cognate tRNA(Asp) but also tRNA(Asn). Reaction proceeds in two steps: L-aspartate is first activated by ATP to form Asp-AMP and then transferred to the acceptor end of tRNA(Asp/Asn). The sequence is that of Aspartate--tRNA(Asp/Asn) ligase from Oleidesulfovibrio alaskensis (strain ATCC BAA-1058 / DSM 17464 / G20) (Desulfovibrio alaskensis).